A 592-amino-acid chain; its full sequence is uncharacterized protein (592 aa).

Helical transmembrane passes span 12-32 (IWIL…IFLL), 58-78 (PILF…ISLV), 102-122 (MGLF…SYYL), 191-211 (ISYT…GVEI), 214-234 (MMVF…FWLG), and 299-319 (FSGF…LIQV). The ABC transmembrane type-1 domain maps to 58-358 (PILFFLLIVA…FRSTYDNFAS (301 aa)). The ABC transporter domain maps to 391-592 (VIFKNLSIQN…LQDKGQWQVL (202 aa)). 424-431 (GKSGAGKT) contributes to the ATP binding site.

Belongs to the ABC transporter superfamily.

It localises to the cell inner membrane. This is an uncharacterized protein from Haemophilus influenzae (strain ATCC 51907 / DSM 11121 / KW20 / Rd).